Reading from the N-terminus, the 541-residue chain is Coiled-coil domain-containing protein 116 (541 aa).

A coiled-coil region spans residues 79–102 (QVLDSLQTVVEQATERLAAMKTEA). A disordered region spans residues 346-397 (LPGNSDLLQPSSKASIPTNREARGEPCDSLTTAYSPKTSHRKSKGRRGSPPN). Residues 351-363 (DLLQPSSKASIPT) show a composition bias toward polar residues. Over residues 383 to 392 (TSHRKSKGRR) the composition is skewed to basic residues. Phosphoserine is present on Ser-394.

The protein localises to the cytoplasm. The protein resides in the cytoskeleton. Its subcellular location is the microtubule organizing center. It localises to the centrosome. This Mus musculus (Mouse) protein is Coiled-coil domain-containing protein 116 (Ccdc116).